We begin with the raw amino-acid sequence, 608 residues long: Kelch-like protein 10 (608 aa).

The region spanning 39–106 (CDVVIKVNGF…AYTRTVPITP (68 aa)) is the BTB domain. 6 Kelch repeats span residues 292-339 (ILFA…YLKG), 340-386 (YVYI…VLGN), 388-433 (IYAM…TLYG), 434-480 (KVYI…AYGE), 481-527 (HVYA…VVDD), and 529-574 (LFVV…VVPG). Position 501 is a phosphoserine (Ser-501).

As to quaternary structure, self-associates. Interacts with CUL3; indicative for the participation in an E3 ubiquitin ligase complex.

Its subcellular location is the cytoplasm. It functions in the pathway protein modification; protein ubiquitination. Functionally, may be a substrate-specific adapter of a CUL3-based E3 ubiquitin-protein ligase complex which mediates the ubiquitination and subsequent proteasomal degradation of target proteins during spermatogenesis. The polypeptide is Kelch-like protein 10 (KLHL10) (Homo sapiens (Human)).